An 810-amino-acid chain; its full sequence is Lon protease (810 aa).

One can recognise a Lon N-terminal domain in the interval 8-201 (LPLLPLRGIL…KLCGIVAKEL (194 aa)). Position 353–360 (353–360 (GPPGVGKT)) interacts with ATP. The 182-residue stretch at 589-770 (NDEVGTVTGM…DQVLAIALLE (182 aa)) folds into the Lon proteolytic domain. Catalysis depends on residues Ser-676 and Lys-719.

Belongs to the peptidase S16 family. Homohexamer. Organized in a ring with a central cavity.

It localises to the cytoplasm. It catalyses the reaction Hydrolysis of proteins in presence of ATP.. Functionally, ATP-dependent serine protease that mediates the selective degradation of mutant and abnormal proteins as well as certain short-lived regulatory proteins. Required for cellular homeostasis and for survival from DNA damage and developmental changes induced by stress. Degrades polypeptides processively to yield small peptide fragments that are 5 to 10 amino acids long. Binds to DNA in a double-stranded, site-specific manner. This is Lon protease from Desulforamulus reducens (strain ATCC BAA-1160 / DSM 100696 / MI-1) (Desulfotomaculum reducens).